Consider the following 736-residue polypeptide: Glycogen [starch] synthase, muscle (736 aa).

Ser8 bears the Phosphoserine; by AMPK and PKA mark. Position 11 is a phosphoserine (Ser11). Lys39 lines the UDP pocket. 2 residues coordinate UDP-alpha-D-glucose: His205 and Arg211. Positions 291, 292, 294, 297, and 301 each coordinate alpha-D-glucose 6-phosphate. Arg331 serves as a coordination point for UDP. Arg331 serves as a coordination point for UDP-alpha-D-glucose. Position 412 is a phosphoserine (Ser412). His501 contacts alpha-D-glucose 6-phosphate. 3 residues coordinate UDP-alpha-D-glucose: Glu510, Trp512, and Gly513. Thr515 contributes to the UDP binding site. Alpha-D-glucose 6-phosphate contacts are provided by Arg582 and Arg586. A disordered region spans residues 631–736 (TQGYRYPRPA…PASSLGEERN (106 aa)). Ser641 carries the phosphoserine; by DYRK2, GSK3-alpha, GSK3-beta and PASK modification. 2 positions are modified to phosphoserine; by GSK3-alpha and GSK3-beta: Ser645 and Ser649. Ser652 carries the post-translational modification Phosphoserine. A Phosphoserine; by GSK3-alpha and GSK3-beta modification is found at Ser653. Ser657 carries the post-translational modification Phosphoserine; by CK2. Positions 658-681 (EDEEEPRDLPPDEDDERYDEDEEA) are enriched in acidic residues. The segment covering 682-695 (AKDRRNIRAPEWPR) has biased composition (basic and acidic residues). Phosphoserine is present on Ser698. Thr700 is subject to Phosphothreonine. Ser709 carries the phosphoserine modification. A compositionally biased stretch (low complexity) spans 714 to 727 (PSSSVSTPSEPLSP). Thr720 bears the Phosphothreonine mark. Ser726 and Ser730 each carry phosphoserine.

This sequence belongs to the glycosyltransferase 3 family. As to quaternary structure, part of the GYS1-GYG1 complex, a heterooctamer composed of a tetramer of GYS1 and 2 dimers of GYG1, where each GYS1 protomer binds to one GYG1 subunit (via GYG1 C-terminus); the GYS1 tetramer may dissociate from GYG1 dimers to continue glycogen polymerization on its own. In terms of processing, phosphorylation at Ser-8 by AMPK inactivates the enzyme activity. Primed phosphorylation at Ser-657 (site 5) by CSNK2A1 and CSNK2A2 is required for inhibitory phosphorylation at Ser-641 (site 3a), Ser-645 (site 3b), Ser-649 (site 3c) and Ser-653 (site 4) by GSK3A an GSK3B. Phosphorylated at Ser-641 by PASK, leading to inactivation; phosphorylation by PASK is inhibited by glycogen. Phosphorylated at Ser-641 by DYRK2, leading to inactivation. Dephosphorylation at Ser-641 and Ser-645 by PP1 activates the enzyme.

It catalyses the reaction [(1-&gt;4)-alpha-D-glucosyl](n) + UDP-alpha-D-glucose = [(1-&gt;4)-alpha-D-glucosyl](n+1) + UDP + H(+). The protein operates within glycan biosynthesis; glycogen biosynthesis. Allosteric activation by glucose-6-phosphate. Phosphorylation reduces the activity towards UDP-glucose. When in the non-phosphorylated state, glycogen synthase does not require glucose-6-phosphate as an allosteric activator; when phosphorylated it does. Glycogen synthase participates in the glycogen biosynthetic process along with glycogenin and glycogen branching enzyme. Extends the primer composed of a few glucose units formed by glycogenin by adding new glucose units to it. In this context, glycogen synthase transfers the glycosyl residue from UDP-Glc to the non-reducing end of alpha-1,4-glucan. This Bos taurus (Bovine) protein is Glycogen [starch] synthase, muscle (GYS1).